Reading from the N-terminus, the 1193-residue chain is DNA-directed RNA polymerase subunit beta (1193 aa).

Residues 1153–1162 show a composition bias toward acidic residues; that stretch reads EMRDLEDDED. Positions 1153–1193 are disordered; the sequence is EMRDLEDDEDAKQNEGLSLPNDEESEELVSADAERDVVTKE. Basic and acidic residues predominate over residues 1184–1193; the sequence is DAERDVVTKE.

It belongs to the RNA polymerase beta chain family. The RNAP catalytic core consists of 2 alpha, 1 beta, 1 beta' and 1 omega subunit. When a sigma factor is associated with the core the holoenzyme is formed, which can initiate transcription.

The catalysed reaction is RNA(n) + a ribonucleoside 5'-triphosphate = RNA(n+1) + diphosphate. Functionally, DNA-dependent RNA polymerase catalyzes the transcription of DNA into RNA using the four ribonucleoside triphosphates as substrates. This is DNA-directed RNA polymerase subunit beta from Bacillus licheniformis (strain ATCC 14580 / DSM 13 / JCM 2505 / CCUG 7422 / NBRC 12200 / NCIMB 9375 / NCTC 10341 / NRRL NRS-1264 / Gibson 46).